The following is a 178-amino-acid chain: MTTLRAFTCDDLFKFNNINLDPLTETYGIPFYLQYLAHWPEYFIVAEAPGGELMGYIMGKAEGSVAREEWHGHVTALSVAPEFRRLGLAAKLMEMLEEISERKGGFFVDLFVRVSNQVAVNMYKQLGYSVYRTVIEYYSASNGEPDEDAYDMRKALSRDTEKKSIIPLPHPVRPEDIE.

Residues 2-157 (TTLRAFTCDD…DAYDMRKALS (156 aa)) enclose the N-acetyltransferase domain.

The protein belongs to the acetyltransferase family. ARD1 subfamily. Component of the N-terminal acetyltransferase B (NatB) complex which is composed of naa20 and naa25.

The protein localises to the cytoplasm. Its subcellular location is the nucleus. It carries out the reaction N-terminal L-methionyl-L-asparaginyl-[protein] + acetyl-CoA = N-terminal N(alpha)-acetyl-L-methionyl-L-asparaginyl-[protein] + CoA + H(+). The enzyme catalyses N-terminal L-methionyl-L-glutaminyl-[protein] + acetyl-CoA = N-terminal N(alpha)-acetyl-L-methionyl-L-glutaminyl-[protein] + CoA + H(+). It catalyses the reaction N-terminal L-methionyl-L-aspartyl-[protein] + acetyl-CoA = N-terminal N(alpha)-acetyl-L-methionyl-L-aspartyl-[protein] + CoA + H(+). The catalysed reaction is N-terminal L-methionyl-L-glutamyl-[protein] + acetyl-CoA = N-terminal N(alpha)-acetyl-L-methionyl-L-glutamyl-[protein] + CoA + H(+). In terms of biological role, catalytic subunit of the NatB complex which catalyzes acetylation of the N-terminal methionine residues of peptides beginning with Met-Asp, Met-Glu, Met-Asn and Met-Gln. Proteins with cell cycle functions are overrepresented in the pool of NatB substrates. Required for maintaining the structure and function of actomyosin fibers and for proper cellular migration. The polypeptide is N-alpha-acetyltransferase 20 (naa20) (Danio rerio (Zebrafish)).